The sequence spans 228 residues: 2,3-bisphosphoglycerate-dependent phosphoglycerate mutase (228 aa).

Residues 8-15 (RHGQSEWN), 21-22 (TG), Arg60, 87-90 (ERHY), Lys98, 114-115 (RR), and 183-184 (GN) contribute to the substrate site. Residue His9 is the Tele-phosphohistidine intermediate of the active site. Glu87 (proton donor/acceptor) is an active-site residue.

The protein belongs to the phosphoglycerate mutase family. BPG-dependent PGAM subfamily.

The enzyme catalyses (2R)-2-phosphoglycerate = (2R)-3-phosphoglycerate. It participates in carbohydrate degradation; glycolysis; pyruvate from D-glyceraldehyde 3-phosphate: step 3/5. In terms of biological role, catalyzes the interconversion of 2-phosphoglycerate and 3-phosphoglycerate. The polypeptide is 2,3-bisphosphoglycerate-dependent phosphoglycerate mutase (Staphylococcus haemolyticus (strain JCSC1435)).